The sequence spans 1138 residues: uncharacterized protein (1138 aa).

The first 28 residues, 1-28, serve as a signal peptide directing secretion; that stretch reads MKLFPRSILIILVLSFALNLGLVTKTHA. 7 helical membrane-spanning segments follow: residues 331-351, 359-379, 392-412, 494-514, 520-540, 554-574, and 699-719; these read IVTAFLTLYVMFFGFKLLLAG, YINFILKMIFVTYFSIGINIT, MIQWAFPFLLDGINGLASWVM, MLVSLALSYPLLVISVAAFMV, CMISIVILGILAPLFVPMFLF, MISFLLQPMVVVTFMITMFSV, and IKNILLALVTACFTLYLMYNF. A compositionally biased stretch (gly residues) spans 775-784; sequence DLKAGQGGGV. 3 disordered regions span residues 775-914, 958-977, and 995-1071; these read DLKA…KGTG, GGGRIRDQQGEETSERRTNA, and ERDN…KQIR. Residues 801 to 830 are compositionally biased toward low complexity; that stretch reads AASGGTSAPTVTTPTASSSVATSSPKTVSS. Pro residues predominate over residues 838-852; the sequence is TPPPAPSEAVSPPPA. Residues 854-869 are compositionally biased toward polar residues; that stretch reads IRTSISTPAPQSNIET. Basic and acidic residues-rich tracts occupy residues 875–888, 961–977, 995–1032, and 1058–1071; these read IIRDNNQESKKEID, RIRDQQGEETSERRTNA, ERDNSVTNKFDKLADELNKSEKAKVEENKNIENDRKEN, and LKEHENPTGVKQIR.

Belongs to the TrbL/VirB6 family.

It is found in the cell membrane. This is an uncharacterized protein from Rickettsia felis (strain ATCC VR-1525 / URRWXCal2) (Rickettsia azadi).